We begin with the raw amino-acid sequence, 580 residues long: Glutamine--tRNA ligase (580 aa).

Positions 41-51 (PEPNGYLHIGH) match the 'HIGH' region motif. Residues 42-44 (EPN) and 48-54 (HIGHAKA) contribute to the ATP site. L-glutamine-binding residues include Asp-74 and Tyr-218. Residues Thr-237, 285 to 286 (RL), and 293 to 295 (MSK) contribute to the ATP site. The short motif at 292–296 (VMSKR) is the 'KMSKS' region element.

This sequence belongs to the class-I aminoacyl-tRNA synthetase family. In terms of assembly, monomer.

It is found in the cytoplasm. It catalyses the reaction tRNA(Gln) + L-glutamine + ATP = L-glutaminyl-tRNA(Gln) + AMP + diphosphate. The protein is Glutamine--tRNA ligase of Xylella fastidiosa (strain 9a5c).